The chain runs to 207 residues: Peptidyl-prolyl cis-trans isomerase FKBP16-1, chloroplastic (207 aa).

The region spanning 104 to 207 is the PPIase FKBP-type domain; it reads GDLVELNYVC…VFEIQLLKVL (104 aa).

The protein belongs to the FKBP-type PPIase family.

It is found in the plastid. The protein localises to the chloroplast thylakoid lumen. The catalysed reaction is [protein]-peptidylproline (omega=180) = [protein]-peptidylproline (omega=0). Functionally, PPIases accelerate the folding of proteins. It catalyzes the cis-trans isomerization of proline imidic peptide bonds in oligopeptides. The polypeptide is Peptidyl-prolyl cis-trans isomerase FKBP16-1, chloroplastic (FKBP16-1) (Arabidopsis thaliana (Mouse-ear cress)).